The sequence spans 440 residues: MVPLKLQALFCLLCCLPWVHPFHWQDTSSFDFRPSVMFHKLQSVMSAAGSGHSKIPKGNGSYPVGCTDLMFGYGNESVFVRLYYPAQDQGRLDTVWIPNKEYFLGLSIFLGTPSIVGNILHLLYGSLTTPASWNSPLRTGEKYPLIVFSHGLGAFRTIYSAIGIGLASNGFIVATVEHRDRSASATYFFEDQVAAKVENRSWLYLRKVKQEESESVRKEQVQQRAIECSRALSAILDIEHGDPKENVLGSAFDMKQLKDAIDETKIALMGHSFGGATVLQALSEDQRFRCGVALDPWMYPVNEELYSRTLQPLLFINSAKFQTPKDIAKMKKFYQPDKERKMITIKGSVHQNFDDFTFVTGKIIGNKLTLKGEIDSRVAIDLTNKASMAFLQKHLGLQKDFDQWDPLVEGDDENLIPGSPFDAVTQVPAQQHSPGSQTQN.

The N-terminal stretch at 1–21 is a signal peptide; that stretch reads MVPLKLQALFCLLCCLPWVHP. N-linked (GlcNAc...) asparagine glycosylation is found at asparagine 59, asparagine 75, and asparagine 199. Catalysis depends on serine 272, which acts as the Nucleophile. Residues aspartate 295 and histidine 350 each act as charge relay system in the active site.

The protein belongs to the AB hydrolase superfamily. Lipase family. In terms of processing, N-glycosylated. In terms of tissue distribution, plasma.

It localises to the secreted. It is found in the extracellular space. It carries out the reaction a 1-O-alkyl-2-acetyl-sn-glycero-3-phosphocholine + H2O = a 1-O-alkyl-sn-glycero-3-phosphocholine + acetate + H(+). The catalysed reaction is 1-O-decyl-2-acetyl-sn-glycero-3-phosphocholine + H2O = 1-O-decyl-sn-glycero-3-phosphocholine + acetate + H(+). The enzyme catalyses 1-O-dodecyl-2-acetyl-sn-glycero-3-phosphocholine + H2O = 1-O-dodecyl-sn-glycero-3-phosphocholine + acetate + H(+). It catalyses the reaction 1-O-tetradecyl-2-acetyl-sn-glycero-3-phosphocholine + H2O = 1-O-tetradecyl-sn-glycero-3-phosphocholine + acetate + H(+). It carries out the reaction 1-O-hexadecyl-2-acetyl-sn-glycero-3-phosphocholine + H2O = 1-O-hexadecyl-sn-glycero-3-phosphocholine + acetate + H(+). The catalysed reaction is 1-O-octadecyl-2-acetyl-sn-glycero-3-phosphocholine + H2O = 1-O-octadecyl-sn-glycero-3-phosphocholine + acetate + H(+). The enzyme catalyses 1-hexadecanoyl-2-acetyl-sn-glycero-3-phosphocholine + H2O = 1-hexadecanoyl-sn-glycero-3-phosphocholine + acetate + H(+). It catalyses the reaction 1-hexadecanoyl-2-propionyl-sn-glycero-3-phosphocholine + H2O = propanoate + 1-hexadecanoyl-sn-glycero-3-phosphocholine + H(+). It carries out the reaction 1-hexadecanoyl-2-butanoyl-sn-glycero-3-phosphocholine + H2O = butanoate + 1-hexadecanoyl-sn-glycero-3-phosphocholine + H(+). The catalysed reaction is 1-hexadecanoyl-2-pentanoyl-sn-glycero-3-phosphocholine + H2O = pentanoate + 1-hexadecanoyl-sn-glycero-3-phosphocholine + H(+). The enzyme catalyses 1-hexadecanoyl-2-glutaroyl-sn-glycero-3-phosphocholine + H2O = glutarate + 1-hexadecanoyl-sn-glycero-3-phosphocholine + H(+). It catalyses the reaction 1-hexadecanoyl-2-(5-oxopentanoyl)-sn-glycero-3-phosphocholine + H2O = 5-oxopentanoate + 1-hexadecanoyl-sn-glycero-3-phosphocholine + H(+). It carries out the reaction 1-hexadecanoyl-2-(9-oxononanoyl)-sn-glycero-3-phosphocholine + H2O = 9-oxononanoate + 1-hexadecanoyl-sn-glycero-3-phosphocholine + H(+). The catalysed reaction is 1-hexadecanoyl-2-[9-hydroperoxy-(10E-octadecenoyl)]-sn-glycero-3-phosphocholine + H2O = 9-hydroperoxy-10E-octadecenoate + 1-hexadecanoyl-sn-glycero-3-phosphocholine + H(+). The enzyme catalyses 1-hexadecanoyl-2-(10-hydroperoxy-8E-octadecenoyl)-sn-glycero-3-phosphocholine + H2O = 10-hydroperoxy-(8E)-octadecenoate + 1-hexadecanoyl-sn-glycero-3-phosphocholine + H(+). Its function is as follows. Lipoprotein-associated calcium-independent phospholipase A2 involved in phospholipid catabolism during inflammatory and oxidative stress response. At the lipid-aqueous interface, hydrolyzes the ester bond of fatty acyl group attached at sn-2 position of phospholipids (phospholipase A2 activity). Specifically targets phospholipids with a short-chain fatty acyl group at sn-2 position. Can hydrolyze phospholipids with long fatty acyl chains, only if they carry oxidized functional groups. Hydrolyzes and inactivates platelet-activating factor (PAF, 1-O-alkyl-2-acetyl-sn-glycero-3-phosphocholine), a potent pro-inflammatory signaling lipid that acts through PTAFR on various innate immune cells. Hydrolyzes oxidatively truncated phospholipids carrying an aldehyde group at omega position, preventing their accumulation in lipoprotein particles and uncontrolled pro-inflammatory effects. As part of high-density lipoprotein (HDL) particles, can hydrolyze phospholipids having long-chain fatty acyl hydroperoxides at sn-2 position and protect against potential accumulation of these oxylipins in the vascular wall. Catalyzes the release from membrane phospholipids of F2-isoprostanes, lipid biomarkers of cellular oxidative damage. This is Platelet-activating factor acetylhydrolase (Pla2g7) from Mus musculus (Mouse).